Here is a 209-residue protein sequence, read N- to C-terminus: Ion-translocating oxidoreductase complex subunit G (209 aa).

A helical transmembrane segment spans residues 9–29; that stretch reads ATTLALFAASTTAVTAVVNML. Threonine 175 is modified (FMN phosphoryl threonine).

It belongs to the RnfG family. As to quaternary structure, the complex is composed of six subunits: RnfA, RnfB, RnfC, RnfD, RnfE and RnfG. Requires FMN as cofactor.

It localises to the cell inner membrane. Functionally, part of a membrane-bound complex that couples electron transfer with translocation of ions across the membrane. The sequence is that of Ion-translocating oxidoreductase complex subunit G from Pectobacterium atrosepticum (strain SCRI 1043 / ATCC BAA-672) (Erwinia carotovora subsp. atroseptica).